The chain runs to 286 residues: MKDRLFLLGQHLLPHHLLSRAAGRLAECRVPWVKNSLIKAFARHFQVDMGQALIEEPTAYEHFNAFFTRALKADARPLDPTPGAILSPADGAVSQLGSIEQGRVFQAKGHSFSVQELLGGDTASAASFQGGNFATVYLSPRDYHRVHMPLAGTLREMIHVPGKLYSVNRLTAENVPELFARNERLVCLFDTECGPMAVVLVGAMIVASIETVWAGVVTPPPRQIKRWRYDEATHPPVRLDKGAELGRFRLGSTVILLFGADRVRWRDGLAPLGELRMGQAIGQASV.

Catalysis depends on charge relay system; for autoendoproteolytic cleavage activity residues D90, H147, and S252. The active-site Schiff-base intermediate with substrate; via pyruvic acid; for decarboxylase activity is the S252. A Pyruvic acid (Ser); by autocatalysis modification is found at S252.

It belongs to the phosphatidylserine decarboxylase family. PSD-B subfamily. Prokaryotic type I sub-subfamily. In terms of assembly, heterodimer of a large membrane-associated beta subunit and a small pyruvoyl-containing alpha subunit. The cofactor is pyruvate. In terms of processing, is synthesized initially as an inactive proenzyme. Formation of the active enzyme involves a self-maturation process in which the active site pyruvoyl group is generated from an internal serine residue via an autocatalytic post-translational modification. Two non-identical subunits are generated from the proenzyme in this reaction, and the pyruvate is formed at the N-terminus of the alpha chain, which is derived from the carboxyl end of the proenzyme. The autoendoproteolytic cleavage occurs by a canonical serine protease mechanism, in which the side chain hydroxyl group of the serine supplies its oxygen atom to form the C-terminus of the beta chain, while the remainder of the serine residue undergoes an oxidative deamination to produce ammonia and the pyruvoyl prosthetic group on the alpha chain. During this reaction, the Ser that is part of the protease active site of the proenzyme becomes the pyruvoyl prosthetic group, which constitutes an essential element of the active site of the mature decarboxylase.

It is found in the cell membrane. It carries out the reaction a 1,2-diacyl-sn-glycero-3-phospho-L-serine + H(+) = a 1,2-diacyl-sn-glycero-3-phosphoethanolamine + CO2. The protein operates within phospholipid metabolism; phosphatidylethanolamine biosynthesis; phosphatidylethanolamine from CDP-diacylglycerol: step 2/2. Catalyzes the formation of phosphatidylethanolamine (PtdEtn) from phosphatidylserine (PtdSer). The sequence is that of Phosphatidylserine decarboxylase proenzyme from Azotobacter vinelandii (strain DJ / ATCC BAA-1303).